The following is a 632-amino-acid chain: Chaperone protein HtpG (632 aa).

The a; substrate-binding stretch occupies residues 1–339; the sequence is MTQQTMSFQA…SSDLPLNVSR (339 aa). Residues 340 to 559 form a b region; sequence EILQESRDVK…DNDMSGYLQR (220 aa). The segment at 560 to 632 is c; it reads MLKAAGQSAP…TNALLLSRAA (73 aa).

It belongs to the heat shock protein 90 family. In terms of assembly, homodimer.

It localises to the cytoplasm. Its function is as follows. Molecular chaperone. Has ATPase activity. The polypeptide is Chaperone protein HtpG (Burkholderia mallei (strain NCTC 10247)).